Consider the following 133-residue polypeptide: MNYDNYWDEDKPELNITPLVDVMLVLLAILMVTTPTLTYKEEIALPSGSKTARATQDKMIEIRMDKDAKIYIDSQTYEYNSFPDTFNLLSKKYDKDTRVSIRADKRLTYDKVIYLLKTIKEAGFLKVSLITSP.

Topologically, residues 1 to 15 (MNYDNYWDEDKPELN) are cytoplasmic. Residues 16 to 32 (ITPLVDVMLVLLAILMV) traverse the membrane as a helical segment. Residues 33–133 (TTPTLTYKEE…FLKVSLITSP (101 aa)) lie on the Periplasmic side of the membrane.

This sequence belongs to the ExbD/TolR family.

It localises to the cell inner membrane. This chain is Putative biopolymer transport protein ExbD-like 1, found in Helicobacter pylori (strain ATCC 700392 / 26695) (Campylobacter pylori).